A 125-amino-acid polypeptide reads, in one-letter code: MKLLTHNLLSSHVRGVGSRGFPLRLQATEVRICPVEFNPNFVARMIPKVEWSAFLEAADNLRLIQVPKGPVEGYEENEEFLRTMHHLLLEVEVIEGTLQCPESGRMFPISRGIPNMLLSEEETES.

The TRM112 domain occupies 2–119 (KLLTHNLLSS…SRGIPNMLLS (118 aa)). Phosphoserine occurs at positions 119 and 125.

Belongs to the TRM112 family. In terms of assembly, part of the heterodimeric BUD23-TRM112 methyltransferase complex; this heterodimerization is necessary for the metabolic stability and activity of the catalytic subunit BUD23. Part of the heterodimeric N6AMT1-TRM112 methyltransferase complex; this heterodimerization is necessary for S-adenosyl-L-methionine-binding to N6AMT1/HEMK2. Part of the heterodimeric ALKBH8-TRM112 methyltransferase complex. Part of the heterodimeric METTL5-TRM112 methyltransferase complex; this heterodimerization is necessary for the stability of the catalytic subunit METTL5. Part of the heterodimeric THUMPD3-TRM112 methyltransferase complex; this complex forms an active tRNA methyltransferase, where TRMT112 acts as an activator of the catalytic subunit THUMPD3. Part of the heterodimeric THUMPD2-TRM112 methyltransferase complex; this complex forms an active tRNA methyltransferase, where TRMT112 acts as an activator of the catalytic subunit THUMPD2. Part of the heterodimeric TRMT11-TRM112 methyltransferase complex; this complex forms an active tRNA methyltransferase, where TRMT112 acts as an activator of the catalytic subunit TRMT11.

The protein resides in the nucleus. Its subcellular location is the nucleoplasm. The protein localises to the cytoplasm. It localises to the perinuclear region. Acts as an activator of both rRNA/tRNA and protein methyltransferases. Together with methyltransferase BUD23, methylates the N(7) position of a guanine in 18S rRNA. The heterodimer with N6AMT1/HEMK2 catalyzes N5-methylation of ETF1 on 'Gln-185', using S-adenosyl L-methionine as methyl donor. The heterodimer with N6AMT1/HEMK2 also monomethylates 'Lys-12' of histone H4 (H4K12me1). The heterodimer with ALKBH8 catalyzes the methylation of 5-carboxymethyl uridine to 5-methylcarboxymethyl uridine at the wobble position of the anticodon loop in target tRNA species. Together with methyltransferase THUMPD3, catalyzes the formation of N(2)-methylguanosine at position 6 in a broad range of tRNA substrates and at position 7 of tRNA(Trp). Involved in the pre-rRNA processing steps leading to small-subunit rRNA production. Together with methyltransferase METTL5, specifically methylates the 6th position of adenine in position 1832 of 18S rRNA. The protein is Multifunctional methyltransferase subunit TRM112-like protein of Homo sapiens (Human).